Here is a 298-residue protein sequence, read N- to C-terminus: Acetylglutamate kinase (298 aa).

Residues 69 to 70 (GG), Arg-91, and Asn-196 each bind substrate.

The protein belongs to the acetylglutamate kinase family. ArgB subfamily.

Its subcellular location is the cytoplasm. The catalysed reaction is N-acetyl-L-glutamate + ATP = N-acetyl-L-glutamyl 5-phosphate + ADP. It functions in the pathway amino-acid biosynthesis; L-arginine biosynthesis; N(2)-acetyl-L-ornithine from L-glutamate: step 2/4. Catalyzes the ATP-dependent phosphorylation of N-acetyl-L-glutamate. In Rhodopseudomonas palustris (strain ATCC BAA-98 / CGA009), this protein is Acetylglutamate kinase.